We begin with the raw amino-acid sequence, 432 residues long: 23S rRNA (uracil(1939)-C(5))-methyltransferase RlmD (432 aa).

Residues 10-68 form the TRAM domain; that stretch reads RVTTREIITVTTDGLDAFGQGVARHHGKALFIAGLLPGERAEVVLSEDKKQFARGDVKK. Positions 81, 87, 90, and 162 each coordinate [4Fe-4S] cluster. S-adenosyl-L-methionine-binding residues include Q265, F294, N299, E315, N342, and D363. The active-site Nucleophile is C389.

It belongs to the class I-like SAM-binding methyltransferase superfamily. RNA M5U methyltransferase family. RlmD subfamily.

The catalysed reaction is uridine(1939) in 23S rRNA + S-adenosyl-L-methionine = 5-methyluridine(1939) in 23S rRNA + S-adenosyl-L-homocysteine + H(+). Functionally, catalyzes the formation of 5-methyl-uridine at position 1939 (m5U1939) in 23S rRNA. This is 23S rRNA (uracil(1939)-C(5))-methyltransferase RlmD from Cronobacter sakazakii (strain ATCC BAA-894) (Enterobacter sakazakii).